Reading from the N-terminus, the 362-residue chain is Leucoanthocyanidin dioxygenase (362 aa).

A disordered region spans residues 1–23 (MVTSAMGPSPRVEELARSGLDTI). A Fe2OG dioxygenase domain is found at 214-313 (LIVQMKINFY…RISWAVFCEP (100 aa)). Residues histidine 238, aspartate 240, and histidine 294 each coordinate Fe cation. Residue arginine 304 is part of the active site.

The protein belongs to the iron/ascorbate-dependent oxidoreductase family. Requires Fe cation as cofactor. L-ascorbate is required as a cofactor. Expressed in red but not in green forma of P.frutescens. In red forma, it is predominantly expressed in stems and leaves, but not in roots.

The enzyme catalyses a (2R,3S,4S)-leucoanthocyanidin + 2-oxoglutarate + O2 = a 4-H-anthocyanidin with a 3-hydroxy group + succinate + CO2 + 2 H2O. Its pathway is pigment biosynthesis; anthocyanin biosynthesis. Functionally, oxidation of leucoanthocyanidins into anthocyanidins. This chain is Leucoanthocyanidin dioxygenase (ANS), found in Perilla frutescens (Beefsteak mint).